The chain runs to 105 residues: Multidrug resistance protein EbrA (105 aa).

4 consecutive transmembrane segments (helical) span residues 2-22 (LIGY…AAML), 35-55 (ALVV…LNHI), 57-77 (LSLS…VIGV), and 84-104 (LNAK…LLNW).

Belongs to the drug/metabolite transporter (DMT) superfamily. Small multidrug resistance (SMR) (TC 2.A.7.1) family. EbrA/EbrB subfamily. In terms of assembly, the efflux pump is composed of EbrA and EbrB.

The protein resides in the cell membrane. Functionally, part of a multidrug efflux pump. Confers resistance to cationic lipophilic dyes such as ethidium bromide, acriflavine, pyronine Y and safranin O. The efflux is probably coupled to an influx of protons. In Bacillus subtilis (strain 168), this protein is Multidrug resistance protein EbrA (ebrA).